The sequence spans 473 residues: Ral-GDS-related protein (473 aa).

A disordered region spans residues 117-215; that stretch reads EPNEAKPDDP…NQPSEELPDM (99 aa). Over residues 134-157 the composition is skewed to low complexity; sequence ALTMPALEPAPPLLADLGPALEPE. Residues 173–185 are compositionally biased toward pro residues; the sequence is GPAPAPGEGPPPG. Residues 219–471 enclose the Ras-GEF domain; that stretch reads PPRLLAEQLT…YKLSCQLEPE (253 aa).

The protein resides in the cytoplasmic vesicle. The sequence is that of Ral-GDS-related protein (RGL4) from Homo sapiens (Human).